The sequence spans 484 residues: Acetaldehyde dehydrogenase (acetylating) (484 aa).

It belongs to the aldehyde dehydrogenase family.

The catalysed reaction is acetaldehyde + NAD(+) + CoA = acetyl-CoA + NADH + H(+). It functions in the pathway organosulfur degradation; alkanesulfonate degradation. Involved in an anaerobic respiration pathway that converts the sulfonate taurine (2-aminoethanesulfonate) to ammonia, acetate and sulfide. Catalyzes the oxidation of acetaldehyde to acetyl-CoA in the presence of CoASH and NAD(+). Highly prefers NAD(+) over NADP(+). This Bilophila wadsworthia (strain 3_1_6) protein is Acetaldehyde dehydrogenase (acetylating).